The sequence spans 307 residues: N-acetylmuramic acid 6-phosphate etherase (307 aa).

The region spanning 59-222 (TTKALSQGGK…STGVMVRLGK (164 aa)) is the SIS domain. E87 acts as the Proton donor in catalysis. The active site involves E118.

The protein belongs to the GCKR-like family. MurNAc-6-P etherase subfamily. As to quaternary structure, homodimer.

The enzyme catalyses N-acetyl-D-muramate 6-phosphate + H2O = N-acetyl-D-glucosamine 6-phosphate + (R)-lactate. The protein operates within amino-sugar metabolism; N-acetylmuramate degradation. In terms of biological role, specifically catalyzes the cleavage of the D-lactyl ether substituent of MurNAc 6-phosphate, producing GlcNAc 6-phosphate and D-lactate. The protein is N-acetylmuramic acid 6-phosphate etherase of Trichodesmium erythraeum (strain IMS101).